Reading from the N-terminus, the 237-residue chain is Phosphatidylserine decarboxylase proenzyme (237 aa).

Catalysis depends on S206, which acts as the Schiff-base intermediate with substrate; via pyruvic acid. S206 is modified (pyruvic acid (Ser); by autocatalysis).

Belongs to the phosphatidylserine decarboxylase family. PSD-A subfamily. Heterodimer of a large membrane-associated beta subunit and a small pyruvoyl-containing alpha subunit. It depends on pyruvate as a cofactor. Is synthesized initially as an inactive proenzyme. Formation of the active enzyme involves a self-maturation process in which the active site pyruvoyl group is generated from an internal serine residue via an autocatalytic post-translational modification. Two non-identical subunits are generated from the proenzyme in this reaction, and the pyruvate is formed at the N-terminus of the alpha chain, which is derived from the carboxyl end of the proenzyme. The post-translation cleavage follows an unusual pathway, termed non-hydrolytic serinolysis, in which the side chain hydroxyl group of the serine supplies its oxygen atom to form the C-terminus of the beta chain, while the remainder of the serine residue undergoes an oxidative deamination to produce ammonia and the pyruvoyl prosthetic group on the alpha chain.

It localises to the cell membrane. The catalysed reaction is a 1,2-diacyl-sn-glycero-3-phospho-L-serine + H(+) = a 1,2-diacyl-sn-glycero-3-phosphoethanolamine + CO2. Its pathway is phospholipid metabolism; phosphatidylethanolamine biosynthesis; phosphatidylethanolamine from CDP-diacylglycerol: step 2/2. In terms of biological role, catalyzes the formation of phosphatidylethanolamine (PtdEtn) from phosphatidylserine (PtdSer). In Rhodococcus erythropolis (strain PR4 / NBRC 100887), this protein is Phosphatidylserine decarboxylase proenzyme.